The sequence spans 780 residues: Striatin (780 aa).

Residues 53-120 (LHFLQHEWAR…QERAKYHKLK (68 aa)) adopt a coiled-coil conformation. Positions 55-63 (FLQHEWARF) are caveolin-binding. A disordered region spans residues 124–150 (ELNQGDMKPPSYDSDEGNETEVQPQQN). Ser137 carries the phosphoserine modification. A calmodulin-binding region spans residues 149–166 (QNSQLMWKQGRQLLRQYL). A Phosphothreonine modification is found at Thr225. 4 positions are modified to phosphoserine: Ser227, Ser229, Ser245, and Ser259. 2 disordered regions span residues 289–310 (DFLV…GTDW) and 365–387 (DELP…RLPE). Basic and acidic residues predominate over residues 299-310 (NESRSAGDGTDW). WD repeat units lie at residues 461–500 (SHFD…PAKK), 514–553 (AHKG…IDPY), 567–606 (GHTD…PALS), 662–701 (NSSC…LIHS), 704–743 (AHLE…CIQE), and 750–780 (KFEE…KVFV).

Belongs to the WD repeat striatin family. In terms of assembly, part of the core of STRIPAK complexes composed of PP2A catalytic and scaffolding subunits, the striatins (PP2A regulatory subunits), the striatin-associated proteins MOB4, STRIP1 and STRIP2, PDCD10 and members of the STE20 kinases, such as STK24 and STK26. Interacts with CTTNBP2; this interaction may regulate dendritic spine distribution of STRN. Activation of glutamate receptors weakens the interaction with CTTNBP2. In terms of tissue distribution, preferentially expressed in brain.

It is found in the cytoplasm. The protein resides in the membrane. It localises to the cell projection. Its subcellular location is the dendritic spine. Calmodulin-binding scaffolding protein which is the center of the striatin-interacting phosphatase and kinase (STRIPAK) complexes. STRIPAK complexes have critical roles in protein (de)phosphorylation and are regulators of multiple signaling pathways including Hippo, MAPK, nuclear receptor and cytoskeleton remodeling. Different types of STRIPAK complexes are involved in a variety of biological processes such as cell growth, differentiation, apoptosis, metabolism and immune regulation. The polypeptide is Striatin (STRN) (Homo sapiens (Human)).